We begin with the raw amino-acid sequence, 123 residues long: MPACRLGLLVASLLLGLLLGLPPVTGTGAEKSGVCPAVEVDMNCTQECLSDADCADNLKCCKAGCVTICQMPNEKEGSCPQVDIAFPQLGLCLDQCQVDSQCPGQLKCCRNGCGKVSCVTPVF.

Positions 1 to 26 (MPACRLGLLVASLLLGLLLGLPPVTG) are cleaved as a signal peptide. WAP domains lie at 28–69 (GAEK…VTIC) and 72–122 (PNEK…VTPV). 8 cysteine pairs are disulfide-bonded: cysteine 35–cysteine 61, cysteine 44–cysteine 65, cysteine 48–cysteine 60, cysteine 54–cysteine 69, cysteine 79–cysteine 109, cysteine 92–cysteine 113, cysteine 96–cysteine 108, and cysteine 102–cysteine 118.

In terms of assembly, homotrimer; disulfide-linked. Detected in the distal parts of the epididymis.

It is found in the secreted. Its function is as follows. Broad range protease inhibitor. The polypeptide is WAP four-disulfide core domain protein 2 (WFDC2) (Sus scrofa (Pig)).